Reading from the N-terminus, the 354-residue chain is Transcription activator of gluconeogenesis ERT1-1 (354 aa).

Positions 1–29 (MSFYPILRGPAKQESPPPPPAPKKRRKTA) are disordered. A DNA-binding region (zn(2)-C6 fungal-type) is located at residues 32–60 (CLHCQKAHLTCDEGRPCARCIKKNMGDQC). Disordered stretches follow at residues 71–111 (LVGL…FGSS) and 128–169 (DTSS…QGSP). Residues 81–98 (QATQQKQQQQQQQQQAVQ) are compositionally biased toward low complexity. Over residues 159 to 169 (SQTAGTPQGSP) the composition is skewed to polar residues.

Belongs to the ERT1/acuK family.

It is found in the nucleus. Transcription factor which regulates nonfermentable carbon utilization. Activator of gluconeogenetic genes. The protein is Transcription activator of gluconeogenesis ERT1-1 (ERT1-1) of Yarrowia lipolytica (strain CLIB 122 / E 150) (Yeast).